A 266-amino-acid chain; its full sequence is Trypsin Blo t 3 (266 aa).

The first 15 residues, 1–15 (MKVLVLFCLVSLAAA), serve as a signal peptide directing secretion. A propeptide spanning residues 16–35 (GPLKDALNKAQVDAFYAEGY) is cleaved from the precursor. Residues 36-260 (IVDGSNAADG…RVGNYISWIK (225 aa)) enclose the Peptidase S1 domain. A disulfide bridge links Cys60 with Cys76. Catalysis depends on charge relay system residues His75 and Asp120. 2 disulfide bridges follow: Cys187-Cys204 and Cys216-Cys240. The Charge relay system role is filled by Ser220.

The protein belongs to the peptidase S1 family.

It is found in the secreted. It carries out the reaction Preferential cleavage: Arg-|-Xaa, Lys-|-Xaa.. The chain is Trypsin Blo t 3 from Blomia tropicalis (Mite).